A 170-amino-acid chain; its full sequence is MKCLLYLCLWCYCVLVSSSIVLICNGGHEYYECGGACDNVCADLHIQNKTNCPIINIRCNDKCYCEDGYARDVNGKCIPIKDCPKIRSRRSIGIPVDKKCCTGPNEHYDEEKVSCPPETCISLVAKFSCIDSPPPSPGCSCNSGYLRLNLTSPCIPICDCPQMQHSPDCQ.

The N-terminal stretch at 1–19 (MKCLLYLCLWCYCVLVSSS) is a signal peptide. Asparagine 48 and asparagine 149 each carry an N-linked (GlcNAc...) asparagine glycan.

Cleaved. In terms of processing, five disulfide bonds are present. When artificially cleaved by thermolysin between Asn-56 and Ile-57, the two obtained chains (called heavy and light chains) remain linked. Post-translationally, the N-terminus is blocked.

Inhibits thermolysin, bacillolysin and pseudolysin, B.polymyxa metalloprotease and human MMP1 and MMP3. No activity on trypsin or cysteine protease papain. The polypeptide is Inducible metalloproteinase inhibitor protein (IMPI) (Galleria mellonella (Greater wax moth)).